Reading from the N-terminus, the 206-residue chain is Ribosomal RNA small subunit methyltransferase G (206 aa).

S-adenosyl-L-methionine-binding positions include Gly-74, Leu-79, 125–126, and Arg-140; that span reads VE.

Belongs to the methyltransferase superfamily. RNA methyltransferase RsmG family.

Its subcellular location is the cytoplasm. It carries out the reaction guanosine(527) in 16S rRNA + S-adenosyl-L-methionine = N(7)-methylguanosine(527) in 16S rRNA + S-adenosyl-L-homocysteine. Its function is as follows. Specifically methylates the N7 position of guanine in position 527 of 16S rRNA. The sequence is that of Ribosomal RNA small subunit methyltransferase G from Shewanella amazonensis (strain ATCC BAA-1098 / SB2B).